A 673-amino-acid polypeptide reads, in one-letter code: Putative transcription factor tau subunit sfc9 (673 aa).

As to quaternary structure, may be a component of the TFIIIC complex.

The protein localises to the nucleus. The polypeptide is Putative transcription factor tau subunit sfc9 (Schizosaccharomyces pombe (strain 972 / ATCC 24843) (Fission yeast)).